The chain runs to 149 residues: Putative pre-16S rRNA nuclease (149 aa).

The protein belongs to the YqgF nuclease family.

It localises to the cytoplasm. In terms of biological role, could be a nuclease involved in processing of the 5'-end of pre-16S rRNA. This chain is Putative pre-16S rRNA nuclease, found in Synechococcus sp. (strain ATCC 27144 / PCC 6301 / SAUG 1402/1) (Anacystis nidulans).